Here is a 417-residue protein sequence, read N- to C-terminus: Oxidoreductase phnG (417 aa).

Residues 16–20 (GGSYA), Arg-61, and Asp-317 contribute to the 6-hydroxy-FAD site.

It belongs to the FAD-dependent oxidoreductase family. It depends on 6-hydroxy-FAD as a cofactor.

It catalyses the reaction deoxyherqueinone + NADPH + O2 + H(+) = herqueinone + NADP(+) + H2O. The protein operates within secondary metabolite biosynthesis. Oxidoreductase; part of the gene cluster that mediates the biosynthesis of phenalenones such as herqueinone, compounds that have been reported to treat tumors, bacterial infections and/or mycoses, and rheumatic diseases. The non-reducing polyketide synthase phnA synthesizes the heptaketide backbone and cyclizes it into the angular, hemiketal-containing naphtho-gamma-pyrone prephenalenone. The product template (PT) domain of phnA catalyzes only the C4-C9 aldol condensation, which is unprecedented among known PT domains. The transformation of prephenalenone to phenalenones requires an FAD-dependent monooxygenase phnB, which catalyzes the C2 aromatic hydroxylation of prephenalenone and ring opening of the gamma-pyrone ring simultaneously. Subsequent intramolecular deprotonation of C3 phenolic oxygen accelerates phenalenone ring closure to yield the tricyclic phenalenone core with a C2 hydroxylation. The prenyltransferase phnF further catalyzes reverse C-prenylation of phenalenone by direct electrophilic substitution at C6, or possibly via first a forward O-prenylation of a neighboring phenol in phenalenone, followed by a Claisen rearrangement. The hydroalkoxylation enzyme phnH catalyzes the 5-exo-trig cyclization via acid catalysis after the spontaneous deprotonation of 7-OH, which leads to the formation of the dihydrobenzofuran atrovenetin. Atrovenetin is further converted to deoxyherqueinone by the O-methyltransferase phnC which can methylate C2-OH to stabilize the northern portion of the phenalenone core. Finally, the oxidoreductase phnG converts deoxyherqueinone to herqueinone via C6 hydroxylation. This Penicillium herquei protein is Oxidoreductase phnG.